Consider the following 436-residue polypeptide: MGQVLPLVTRQGDRIAIVSGLRTPFARQGTAFHGIPAVDLGKMVVGELLARSEIPAEVIEQLVFGQVVQMPEAPNIAREIVLGTGMNVHTDAYSVSRACATSFQAVANVAESLMAGTIRAGIAGGADSSSVLPIGVSKKLARVLVDVNKARTMSQRLKLFSRLRLRDLMPVPPAVAEYSTGLRMGDTAEQMAKTYGITREQQDALAHRSHQRAAQAWSDGKLKEEVMTAFIPPYKQPLVEDNNIRGNSSLADYAKLRPAFDRKHGTVTAANSTPLTDGAAAVILMTESRAKELGLVPLGYLRSYAFTAIDVWQDMLLGPAWSTPLALERAGLTMSDLTLIDMHEAFAAQTLANIQLLGSERFAREVLGRAHATGEVDDSKFNVLGGSIAYGHPFAATGARMITQTLHELHRRGGGFGLVTACAAGGLGAAMVLEAE.

The active-site Acyl-thioester intermediate is cysteine 99. Catalysis depends on proton acceptor residues histidine 392 and cysteine 422.

The protein belongs to the thiolase-like superfamily. Thiolase family. Heterotetramer of two alpha chains (FadJ) and two beta chains (FadI).

It localises to the cytoplasm. It carries out the reaction an acyl-CoA + acetyl-CoA = a 3-oxoacyl-CoA + CoA. Its pathway is lipid metabolism; fatty acid beta-oxidation. In terms of biological role, catalyzes the final step of fatty acid oxidation in which acetyl-CoA is released and the CoA ester of a fatty acid two carbons shorter is formed. The chain is 3-ketoacyl-CoA thiolase from Escherichia coli (strain 55989 / EAEC).